Reading from the N-terminus, the 473-residue chain is 3-isopropylmalate dehydratase large subunit (473 aa).

The tract at residues 289–319 is disordered; that stretch reads TVTWGTTPGQTAGITEPIPDPDDLPEEDRDT. Over residues 291-301 the composition is skewed to polar residues; sequence TWGTTPGQTAG. Positions 307-317 are enriched in acidic residues; that stretch reads PDPDDLPEEDR. Residues Cys348, Cys408, and Cys411 each coordinate [4Fe-4S] cluster.

This sequence belongs to the aconitase/IPM isomerase family. LeuC type 1 subfamily. In terms of assembly, heterodimer of LeuC and LeuD. [4Fe-4S] cluster serves as cofactor.

The catalysed reaction is (2R,3S)-3-isopropylmalate = (2S)-2-isopropylmalate. It participates in amino-acid biosynthesis; L-leucine biosynthesis; L-leucine from 3-methyl-2-oxobutanoate: step 2/4. In terms of biological role, catalyzes the isomerization between 2-isopropylmalate and 3-isopropylmalate, via the formation of 2-isopropylmaleate. The polypeptide is 3-isopropylmalate dehydratase large subunit (Halorubrum lacusprofundi (strain ATCC 49239 / DSM 5036 / JCM 8891 / ACAM 34)).